Reading from the N-terminus, the 275-residue chain is tRNA pseudouridine synthase A (275 aa).

D55 serves as the catalytic Nucleophile. Y111 lines the substrate pocket.

This sequence belongs to the tRNA pseudouridine synthase TruA family.

The enzyme catalyses uridine(38/39/40) in tRNA = pseudouridine(38/39/40) in tRNA. Formation of pseudouridine at positions 38, 39 and 40 in the anticodon stem and loop of transfer RNAs. The sequence is that of tRNA pseudouridine synthase A from Methanococcoides burtonii (strain DSM 6242 / NBRC 107633 / OCM 468 / ACE-M).